The following is a 326-amino-acid chain: Tagatose 1,6-diphosphate aldolase (326 aa).

It belongs to the aldolase LacD family.

The catalysed reaction is D-tagatofuranose 1,6-bisphosphate = D-glyceraldehyde 3-phosphate + dihydroxyacetone phosphate. The protein operates within carbohydrate metabolism; D-tagatose 6-phosphate degradation; D-glyceraldehyde 3-phosphate and glycerone phosphate from D-tagatose 6-phosphate: step 2/2. This Staphylococcus aureus (strain Mu3 / ATCC 700698) protein is Tagatose 1,6-diphosphate aldolase.